We begin with the raw amino-acid sequence, 1470 residues long: MNNNKEVPQNSVAVSSSSSAPITVISPQQDANNFIKKRRTALRNRIYAIVRHKQKQHQIFLDKKNQQQQQRVDDATQRALLEKQDQQCIAATRMIEEELLKSSRSFEEYFDLRTFDARVRTILQQLGTMLSQRRAAAAAMNNGEAQCITSTRAVHTSISVSNSFQCGRSLVPINCTTATAGAFSIGPDMQTHHSTGANHQMVEVNRPNMNQITCGISSPLITGFNGNCVPVSANIPMTSQDLFNATHFSTLPQPFLQPPPDQSHMHRYSMSNVASFGQSNPYPCGVVMSSGSMAVAQNSIPWNNPNPMQGLDPTVTSYHSNLQPMQQTPLPKRQLHHPLWNTNFQSAPNNRDNLPQVSQQLSNHGSRQHRGQHSQNLYPGQLQNQDRLLPNLTQQAMALAAPVMHVPSKQVNEDCGQTSSNTVLRWIPFMFHARHCKAKKDKCASKFCFQARKIVKHIDCCKVPNCKYRYCLGTRMWLDHFKQCKSISCRTCVAVREYMEKNKYTIVPLRRAKCSSASSKCQPKKSSKSRQAYKKGGAEAPSVDADLQRSIKRPKLHRPSQNITPETKSISVTGCGVVCKPHSLMNMQEKDGLQSLKVEAMPMDIDVPGASEIPVTRELVKHVAEDTPKGNNCGGFAMVEKTSCLLAQGKSKCMNEMSAPKEENVKQSVEVVDASKMEISSLVELFTPEQVKEHIRSLRQWVGQSKTKAEKNKAMGCSMSVNSCQLCAVEWLVFEPVPIYCSPCGIRIKKNALHYSIAVGESRHYVCAPCYNEAREKLVFLDGTSIPKTRLQKKKNDEQVPEGWVQCDKCEAWQHIICALFNSRRNHGESTKYTCPSCYIQEVEQRERRPLPLSAVPGATSLPVTSLSKHLEERLFKKLKEERQERARLQGKTYEEVPGAESLTVRVVASVDKVLEVKERFLELFREENYPSEFPYKSKAIFLFQKIENVEVCLFGMFVQEFGTDSGPPNERRVYLSYLDSVKYFRPTFRTVSGEALRTFVYHEILIGYLDYCKKRGFTSCYIWACPPLKGDDYILYCHPEIQKTPKTDKLREWYLAMLRKASKEDVVVECTNLYNHFFVQSGECRANVTAARLPYFDGDYWPSAAEDLLRQMNQEDDGETKLHRKGLTKKVISKRALKAVGQLDLSLNASKDRLMMQKLGETICPMKEDFIMVHLQHCCKHCTTLMVSGNRWVCNHCKNFQICDKCYEVEQNRINIERHPINQKEKHALFPVAIKDVPTKIEDKDNNLESEFFHNRQAFLNLCQGNNYQYETLRRAKHSSMMILYHLHNPTAPAFATVCTICQQEVENSQGWHCEVCPGYDVCSACYSKDSINHSHKLTSRSSSTDSTVVQQNGQASQSYQVKLEKLKKLLVHAATCRSTQCQYQGCRKSKMLFRHCIDCTTGDCPICKGLWSLLKLHARNCRDSKCTVPKCSGLRAISRRKQQQADKRRRAAVMEMMRERAAEATRTG.

A compositionally biased stretch (polar residues) spans 1–10 (MNNNKEVPQN). Disordered regions lie at residues 1–20 (MNNN…SSSA) and 342–376 (TNFQ…HSQN). The span at 11–20 (SVAVSSSSSA) shows a compositional bias: low complexity. The segment covering 342-365 (TNFQSAPNNRDNLPQVSQQLSNHG) has biased composition (polar residues). A TAZ-type 1 zinc finger spans residues 416–495 (GQTSSNTVLR…SISCRTCVAV (80 aa)). The segment at 518-566 (SSKCQPKKSSKSRQAYKKGGAEAPSVDADLQRSIKRPKLHRPSQNITPE) is disordered. Residues 522–533 (QPKKSSKSRQAY) are compositionally biased toward basic residues. The PHD-type zinc finger occupies 764 to 841 (HYVCAPCYNE…KYTCPSCYIQ (78 aa)). One can recognise a CBP/p300-type HAT domain in the interval 856–1293 (VPGATSLPVT…ILYHLHNPTA (438 aa)). Acetyl-CoA-binding positions include 979-981 (LDS), 998-999 (RT), and Trp1054. 2 consecutive ZZ-type zinc fingers follow at residues 1175–1238 (HLQH…IKDV) and 1295–1347 (AFAT…SSTD). 16 residues coordinate Zn(2+): Cys1180, Cys1183, Cys1195, Cys1198, Cys1204, Cys1207, His1220, His1228, Cys1300, Cys1303, Cys1315, Cys1318, Cys1324, Cys1327, His1335, and His1337. The TAZ-type 2 zinc finger occupies 1358-1436 (SQSYQVKLEK…KCTVPKCSGL (79 aa)).

As to expression, rosette leaves, stems and flowers.

It is found in the nucleus. It carries out the reaction L-lysyl-[protein] + acetyl-CoA = N(6)-acetyl-L-lysyl-[protein] + CoA + H(+). Its function is as follows. Acetyltransferase enzyme. Acetylates histones, giving a specific tag for transcriptional activation. This Arabidopsis thaliana (Mouse-ear cress) protein is Histone acetyltransferase HAC4 (HAC4).